Reading from the N-terminus, the 857-residue chain is Gelation factor (857 aa).

A Blocked amino end (Met) modification is found at M1. An actin-binding region spans residues 1–250; the sequence is MAAAPSGKTW…EKKRRETSDA (250 aa). Calponin-homology (CH) domains are found at residues 12-117 and 125-227; these read DVQK…LRYQ and NSPK…DYAL. The interval 229–246 is regulatory site; it reads KEKRDADALAALEKKRRE. 6 Filamin repeats span residues 245–346, 347–446, 447–545, 546–645, 646–747, and 763–837; these read RETS…NVKI, DGSD…EVKI, LNSD…SIHI, KPAA…TVTV, KPAP…DVKC, and FTVA…KQVL. A disordered region spans residues 832–857; it reads PFKQVLGNPGKKNPEVKSFTTTRTAN.

As to quaternary structure, homodimer.

F-actin cross-linking protein. This chain is Gelation factor (abpC), found in Dictyostelium discoideum (Social amoeba).